A 216-amino-acid chain; its full sequence is Probable transaldolase (216 aa).

Lys-83 serves as the catalytic Schiff-base intermediate with substrate.

The protein belongs to the transaldolase family. Type 3B subfamily.

It is found in the cytoplasm. The catalysed reaction is D-sedoheptulose 7-phosphate + D-glyceraldehyde 3-phosphate = D-erythrose 4-phosphate + beta-D-fructose 6-phosphate. It functions in the pathway carbohydrate degradation; pentose phosphate pathway; D-glyceraldehyde 3-phosphate and beta-D-fructose 6-phosphate from D-ribose 5-phosphate and D-xylulose 5-phosphate (non-oxidative stage): step 2/3. In terms of biological role, transaldolase is important for the balance of metabolites in the pentose-phosphate pathway. The protein is Probable transaldolase of Hyphomonas neptunium (strain ATCC 15444).